A 468-amino-acid polypeptide reads, in one-letter code: RuvB-like helicase 2 (468 aa).

Position 76–83 (76–83 (GPPSTGKT)) interacts with ATP.

The protein belongs to the RuvB family. As to quaternary structure, may form heterododecamers with RVB1. Component of the SWR1 chromatin remodeling complex, the INO80 chromatin remodeling complex, and of the R2TP complex.

It is found in the nucleus. The catalysed reaction is ATP + H2O = ADP + phosphate + H(+). DNA helicase which participates in several chromatin remodeling complexes, including the SWR1 and the INO80 complexes. The SWR1 complex mediates the ATP-dependent exchange of histone H2A for the H2A variant HZT1 leading to transcriptional regulation of selected genes by chromatin remodeling. The INO80 complex remodels chromatin by shifting nucleosomes and is involved in DNA repair. Also involved in pre-rRNA processing. This Emericella nidulans (strain FGSC A4 / ATCC 38163 / CBS 112.46 / NRRL 194 / M139) (Aspergillus nidulans) protein is RuvB-like helicase 2 (rvb2).